A 308-amino-acid polypeptide reads, in one-letter code: Pseudouridine-5'-phosphate glycosidase (308 aa).

Glutamate 29 acts as the Proton donor in catalysis. The substrate site is built by lysine 90 and valine 110. Aspartate 142 is a Mn(2+) binding site. 144–146 lines the substrate pocket; that stretch reads SSD. Lysine 163 functions as the Nucleophile in the catalytic mechanism.

This sequence belongs to the pseudouridine-5'-phosphate glycosidase family. As to quaternary structure, homotrimer. It depends on Mn(2+) as a cofactor.

The catalysed reaction is D-ribose 5-phosphate + uracil = psi-UMP + H2O. Its function is as follows. Catalyzes the reversible cleavage of pseudouridine 5'-phosphate (PsiMP) to ribose 5-phosphate and uracil. Functions biologically in the cleavage direction, as part of a pseudouridine degradation pathway. The protein is Pseudouridine-5'-phosphate glycosidase of Serratia proteamaculans (strain 568).